The sequence spans 158 residues: ATP synthase subunit b' (158 aa).

The chain crosses the membrane as a helical span at residues 24–44 (ATLPLMAVQILVLVFLLNAVF).

It belongs to the ATPase B chain family. As to quaternary structure, F-type ATPases have 2 components, F(1) - the catalytic core - and F(0) - the membrane proton channel. F(1) has five subunits: alpha(3), beta(3), gamma(1), delta(1), epsilon(1). F(0) has four main subunits: a(1), b(1), b'(1) and c(10-14). The alpha and beta chains form an alternating ring which encloses part of the gamma chain. F(1) is attached to F(0) by a central stalk formed by the gamma and epsilon chains, while a peripheral stalk is formed by the delta, b and b' chains.

It is found in the cellular thylakoid membrane. In terms of biological role, f(1)F(0) ATP synthase produces ATP from ADP in the presence of a proton or sodium gradient. F-type ATPases consist of two structural domains, F(1) containing the extramembraneous catalytic core and F(0) containing the membrane proton channel, linked together by a central stalk and a peripheral stalk. During catalysis, ATP synthesis in the catalytic domain of F(1) is coupled via a rotary mechanism of the central stalk subunits to proton translocation. Component of the F(0) channel, it forms part of the peripheral stalk, linking F(1) to F(0). The b'-subunit is a diverged and duplicated form of b found in plants and photosynthetic bacteria. The chain is ATP synthase subunit b' from Synechococcus elongatus (strain ATCC 33912 / PCC 7942 / FACHB-805) (Anacystis nidulans R2).